The primary structure comprises 490 residues: Protein nucleotidyltransferase YdiU (490 aa).

Residues Gly-94, Gly-96, Arg-97, Lys-117, Asp-129, Gly-130, Arg-180, and Arg-187 each coordinate ATP. The active-site Proton acceptor is Asp-256. Residues Asn-257 and Asp-266 each contribute to the Mg(2+) site. An ATP-binding site is contributed by Asp-266.

It belongs to the SELO family. It depends on Mg(2+) as a cofactor. Mn(2+) serves as cofactor.

The catalysed reaction is L-seryl-[protein] + ATP = 3-O-(5'-adenylyl)-L-seryl-[protein] + diphosphate. It carries out the reaction L-threonyl-[protein] + ATP = 3-O-(5'-adenylyl)-L-threonyl-[protein] + diphosphate. It catalyses the reaction L-tyrosyl-[protein] + ATP = O-(5'-adenylyl)-L-tyrosyl-[protein] + diphosphate. The enzyme catalyses L-histidyl-[protein] + UTP = N(tele)-(5'-uridylyl)-L-histidyl-[protein] + diphosphate. The catalysed reaction is L-seryl-[protein] + UTP = O-(5'-uridylyl)-L-seryl-[protein] + diphosphate. It carries out the reaction L-tyrosyl-[protein] + UTP = O-(5'-uridylyl)-L-tyrosyl-[protein] + diphosphate. Functionally, nucleotidyltransferase involved in the post-translational modification of proteins. It can catalyze the addition of adenosine monophosphate (AMP) or uridine monophosphate (UMP) to a protein, resulting in modifications known as AMPylation and UMPylation. In Clostridium perfringens (strain SM101 / Type A), this protein is Protein nucleotidyltransferase YdiU.